A 169-amino-acid polypeptide reads, in one-letter code: Peptide methionine sulfoxide reductase MsrA (169 aa).

The active site involves cysteine 10.

Belongs to the MsrA Met sulfoxide reductase family.

It catalyses the reaction L-methionyl-[protein] + [thioredoxin]-disulfide + H2O = L-methionyl-(S)-S-oxide-[protein] + [thioredoxin]-dithiol. The catalysed reaction is [thioredoxin]-disulfide + L-methionine + H2O = L-methionine (S)-S-oxide + [thioredoxin]-dithiol. Functionally, has an important function as a repair enzyme for proteins that have been inactivated by oxidation. Catalyzes the reversible oxidation-reduction of methionine sulfoxide in proteins to methionine. The sequence is that of Peptide methionine sulfoxide reductase MsrA from Streptococcus pyogenes serotype M12 (strain MGAS2096).